Consider the following 598-residue polypeptide: Pescadillo homolog (598 aa).

The segment at 296–317 is disordered; that stretch reads QAMKADSKDKDDNSNDEAPENV. Residues 345–439 form the BRCT domain; sequence PTATLFEDFV…ELLSANLYLP (95 aa). Disordered stretches follow at residues 452–501, 515–544, and 564–598; these read DALG…EDVE, GIAY…EDEE, and MKYS…VEKK. Positions 463 to 485 are enriched in acidic residues; it reads ESEDESSDSSEESDSEIENEEED. Composition is skewed to basic and acidic residues over residues 520-532, 570-579, and 586-598; these read KAKD…DVAS, QKEDKIEELK, and AKKE…VEKK. Residues 557 to 598 adopt a coiled-coil conformation; that stretch reads QRKLYKKMKYSNQQKEDKIEELKKKKKQLAKKEKTLKKVEKK.

Belongs to the pescadillo family. Component of the NOP7 complex, composed of ERB1, NOP7 and YTM1. The complex is held together by ERB1, which interacts with NOP7 via its N-terminal domain and with YTM1 via a high-affinity interaction between the seven-bladed beta-propeller domains of the 2 proteins. The NOP7 complex associates with the 66S pre-ribosome.

Its subcellular location is the nucleus. The protein resides in the nucleolus. It is found in the nucleoplasm. In terms of biological role, component of the NOP7 complex, which is required for maturation of the 25S and 5.8S ribosomal RNAs and formation of the 60S ribosome. In Candida glabrata (strain ATCC 2001 / BCRC 20586 / JCM 3761 / NBRC 0622 / NRRL Y-65 / CBS 138) (Yeast), this protein is Pescadillo homolog.